Reading from the N-terminus, the 273-residue chain is MSDMHSLLIAAILGVVEGLTEFLPVSSTGHMIIVGHLLGFEGDTAKTFEVVIQLGSILAVVVMFWRRLFGLIGIHFGRPLQREGESKGRLTLIHILLGMIPAVVLGLVFHDTIKSLFNPINVMYALVVGGLLLIAAECLKPKEPRAPGLDDMTYRQAFMIGCFQCLALWPGFSRSGATISGGMLMGVSRYAASEFSFLLAVPMMMGATVLDLYKSWSFLTAADIPMFAVGFVTAFVVALIAIKTFLQLIKRISFIPFAIYRFVVAAAVYVVFF.

7 helical membrane-spanning segments follow: residues 6 to 26 (SLLI…LPVS), 45 to 65 (AKTF…VMFW), 90 to 110 (LTLI…LVFH), 116 to 136 (LFNP…LIAA), 190 to 210 (YAAS…ATVL), 222 to 242 (ADIP…LIAI), and 252 to 272 (ISFI…YVVF).

This sequence belongs to the UppP family.

The protein localises to the cell inner membrane. It carries out the reaction di-trans,octa-cis-undecaprenyl diphosphate + H2O = di-trans,octa-cis-undecaprenyl phosphate + phosphate + H(+). Its function is as follows. Catalyzes the dephosphorylation of undecaprenyl diphosphate (UPP). Confers resistance to bacitracin. This is Undecaprenyl-diphosphatase from Salmonella heidelberg (strain SL476).